The following is a 716-amino-acid chain: Polycystin-2 (716 aa).

Basic and acidic residues-rich tracts occupy residues 1-10 (MNYGAADERW) and 30-41 (MVSEEYEHDKKK). Positions 1–44 (MNYGAADERWANPPQPVAAAEHGPSFDHSMVSEEYEHDKKKNPA) are disordered. The Cytoplasmic portion of the chain corresponds to 1 to 72 (MNYGAADERW…SDGKIKLTAR (72 aa)). The helical transmembrane segment at 73-93 (SFMEVGGYAVFLIVLVYVAFA) threads the bilayer. At 94-324 (QNSIQSYYYS…YQTSGGTRMM (231 aa)) the chain is on the extracellular side. Residues N150 and N177 are each glycosylated (N-linked (GlcNAc...) asparagine). A disulfide bridge connects residues C180 and C193. The helical transmembrane segment at 325–345 (IFEGIFCGFILYFIFEELFAI) threads the bilayer. Residues 346 to 355 (GRHRLHYLTQ) are Cytoplasmic-facing. A helical membrane pass occupies residues 356–376 (FWNLVDVVLLGFSVATIILSV). N377 carries an N-linked (GlcNAc...) asparagine glycan. The Extracellular segment spans residues 377–409 (NRTKTGVNRVNSVIENGLTNAPFDDVTSSENSY). A helical transmembrane segment spans residues 410–430 (LNIKACVVFVAWVKVFKFISV). At 431-447 (NKTMSQLSSTLTRSAKD) the chain is on the cytoplasmic side. A helical transmembrane segment spans residues 448–468 (IGGFAVMFAVFFFAFAQFGYL). Topologically, residues 469 to 482 (CFGTQIADYSNLYN) are extracellular. Residues 483 to 497 (SAFALLRLILGDFNF) constitute an intramembrane region (pore-forming). Topologically, residues 498-510 (SALESCNRFFGPA) are extracellular. Residues 511-531 (FFIAYVFFVSFILLNMFLAII) form a helical membrane-spanning segment. Residues 532 to 716 (NDSYVEVKAE…ITSIADKKEE (185 aa)) are Cytoplasmic-facing. A Phosphoserine; by CK2 modification is found at S534. The stretch at 613 to 680 (EKVAEDIADE…IEKQRVQQQD (68 aa)) forms a coiled coil. A disordered region spans residues 696–716 (RNRESAARRPTITSIADKKEE).

Belongs to the polycystin family. In terms of processing, phosphorylated. CK2 (kin-3 and kin-10) and calcineurin act antagonistically to regulate the phosphorylation state. As to expression, exclusively expressed in a subset of 3 categories of adult male sensory neurons: ray neurons, hook neurons and head cephalic (CEM) neurons. Expressed in the male tail.

The protein localises to the cell membrane. It is found in the cell projection. Its subcellular location is the cilium membrane. It localises to the cilium. The protein resides in the axon. The protein localises to the dendrite. It is found in the perikaryon. Its subcellular location is the endoplasmic reticulum membrane. Functionally, functions as a calcium permeable cation channel. Required for 2 aspects of male mating behavior: response to hermaphrodite contact and vulva location. Acts in the same pathway as lov-1 and atp-2 in response behavior. This chain is Polycystin-2, found in Caenorhabditis elegans.